We begin with the raw amino-acid sequence, 69 residues long: Cold shock-like protein CspC (69 aa).

A CSD domain is found at 6-66; it reads GQVKWFNESK…GQKGPAAVNV (61 aa).

It localises to the cytoplasm. The chain is Cold shock-like protein CspC (cspC) from Shigella flexneri.